Here is a 204-residue protein sequence, read N- to C-terminus: LexA repressor (204 aa).

A DNA-binding region (H-T-H motif) is located at residues Arg-29–Arg-49. Active-site for autocatalytic cleavage activity residues include Ser-123 and Lys-160.

The protein belongs to the peptidase S24 family. In terms of assembly, homodimer.

The catalysed reaction is Hydrolysis of Ala-|-Gly bond in repressor LexA.. Its function is as follows. Represses a number of genes involved in the response to DNA damage (SOS response), including recA and lexA. In the presence of single-stranded DNA, RecA interacts with LexA causing an autocatalytic cleavage which disrupts the DNA-binding part of LexA, leading to derepression of the SOS regulon and eventually DNA repair. The polypeptide is LexA repressor (Alcanivorax borkumensis (strain ATCC 700651 / DSM 11573 / NCIMB 13689 / SK2)).